The primary structure comprises 972 residues: UPF0746 protein DDB_G0280785 (972 aa).

The segment covering 1–19 (MISNKRKEIENINRHHEKD) has biased composition (basic and acidic residues). The segment at 1–30 (MISNKRKEIENINRHHEKDNDDDDSDGIDN) is disordered. One can recognise an SAP domain in the interval 44–78 (SGSTNYRELQIIAKSLGLASNGKKQLVYNRIEGYF).

The protein belongs to the UPF0746 family.

This is UPF0746 protein DDB_G0280785 from Dictyostelium discoideum (Social amoeba).